Here is a 77-residue protein sequence, read N- to C-terminus: Acyl carrier protein (77 aa).

A Carrier domain is found at 2–77; the sequence is SEKLQKIQAL…DAVAYIEERS (76 aa). S37 carries the post-translational modification O-(pantetheine 4'-phosphoryl)serine.

Belongs to the acyl carrier protein (ACP) family. 4'-phosphopantetheine is transferred from CoA to a specific serine of apo-ACP by AcpS. This modification is essential for activity because fatty acids are bound in thioester linkage to the sulfhydryl of the prosthetic group.

It is found in the cytoplasm. It functions in the pathway lipid metabolism; fatty acid biosynthesis. In terms of biological role, carrier of the growing fatty acid chain in fatty acid biosynthesis. The protein is Acyl carrier protein of Desulforudis audaxviator (strain MP104C).